We begin with the raw amino-acid sequence, 229 residues long: Potassium/proton antiporter CemA (229 aa).

Helical transmembrane passes span 7-27 (FTPLLYLASIVFLPWWISLSL), 114-134 (IICFVILSGYSILGNEELLIL), 154-174 (ILLLTDLCIGFHSPHGWELMI), and 189-209 (IISGLVSTFPVILDTILKYWI).

The protein belongs to the CemA family.

It is found in the plastid. The protein resides in the chloroplast inner membrane. The catalysed reaction is K(+)(in) + H(+)(out) = K(+)(out) + H(+)(in). In terms of biological role, contributes to K(+)/H(+) antiport activity by supporting proton efflux to control proton extrusion and homeostasis in chloroplasts in a light-dependent manner to modulate photosynthesis. Prevents excessive induction of non-photochemical quenching (NPQ) under continuous-light conditions. Indirectly promotes efficient inorganic carbon uptake into chloroplasts. This chain is Potassium/proton antiporter CemA, found in Vitis vinifera (Grape).